Reading from the N-terminus, the 616-residue chain is Dihydroxy-acid dehydratase (616 aa).

Residue Asp-81 participates in Mg(2+) binding. Cys-122 lines the [2Fe-2S] cluster pocket. Residues Asp-123 and Lys-124 each coordinate Mg(2+). Residue Lys-124 is modified to N6-carboxylysine. [2Fe-2S] cluster is bound at residue Cys-195. Glu-491 provides a ligand contact to Mg(2+). The active-site Proton acceptor is the Ser-517.

Belongs to the IlvD/Edd family. As to quaternary structure, homodimer. It depends on [2Fe-2S] cluster as a cofactor. Mg(2+) serves as cofactor.

The enzyme catalyses (2R)-2,3-dihydroxy-3-methylbutanoate = 3-methyl-2-oxobutanoate + H2O. It catalyses the reaction (2R,3R)-2,3-dihydroxy-3-methylpentanoate = (S)-3-methyl-2-oxopentanoate + H2O. It functions in the pathway amino-acid biosynthesis; L-isoleucine biosynthesis; L-isoleucine from 2-oxobutanoate: step 3/4. The protein operates within amino-acid biosynthesis; L-valine biosynthesis; L-valine from pyruvate: step 3/4. In terms of biological role, functions in the biosynthesis of branched-chain amino acids. Catalyzes the dehydration of (2R,3R)-2,3-dihydroxy-3-methylpentanoate (2,3-dihydroxy-3-methylvalerate) into 2-oxo-3-methylpentanoate (2-oxo-3-methylvalerate) and of (2R)-2,3-dihydroxy-3-methylbutanoate (2,3-dihydroxyisovalerate) into 2-oxo-3-methylbutanoate (2-oxoisovalerate), the penultimate precursor to L-isoleucine and L-valine, respectively. The chain is Dihydroxy-acid dehydratase from Tolumonas auensis (strain DSM 9187 / NBRC 110442 / TA 4).